Here is a 346-residue protein sequence, read N- to C-terminus: N-acetyl-gamma-glutamyl-phosphate reductase (346 aa).

Cysteine 150 is a catalytic residue.

This sequence belongs to the NAGSA dehydrogenase family. Type 1 subfamily.

The protein localises to the cytoplasm. It carries out the reaction N-acetyl-L-glutamate 5-semialdehyde + phosphate + NADP(+) = N-acetyl-L-glutamyl 5-phosphate + NADPH + H(+). It participates in amino-acid biosynthesis; L-arginine biosynthesis; N(2)-acetyl-L-ornithine from L-glutamate: step 3/4. Its function is as follows. Catalyzes the NADPH-dependent reduction of N-acetyl-5-glutamyl phosphate to yield N-acetyl-L-glutamate 5-semialdehyde. The polypeptide is N-acetyl-gamma-glutamyl-phosphate reductase (Moorella thermoacetica (strain ATCC 39073 / JCM 9320)).